A 414-amino-acid chain; its full sequence is Ena/VASP-like protein (414 aa).

Residues 1 to 112 enclose the WH1 domain; sequence MSEQSICQAR…NAMLFALNIM (112 aa). Residue Ser-130 is modified to Phosphoserine. The segment at 157 to 369 is disordered; it reads ATGPILPPGH…SRVKPAGSVN (213 aa). The span at 179–204 shows a compositional bias: pro residues; that stretch reads GPPPPPPPPVPPPPTGSTPPPPPPLP. Low complexity predominate over residues 217–228; it reads SASGLAAALAGA. The segment at 220–240 is EVH2 block A; that stretch reads GLAAALAGAKLRRVQRPEDAS. An EVH2 region spans residues 220–411; that stretch reads GLAAALAGAK…DAIRQELSGI (192 aa). The short motif at 229–232 is the KLKR element; that stretch reads KLRR. Residues 240–251 are compositionally biased toward low complexity; the sequence is SGGSSPSGTSKS. 2 positions are modified to phosphoserine: Ser-244 and Ser-257. The interval 263–280 is EVH2 block B; it reads GGLMEEMNKLLAKRRKAA. Polar residues predominate over residues 297–318; sequence EDPSTSPSPGTRATSQPPNSSE. Phosphoserine is present on residues Ser-302, Ser-304, Ser-327, Ser-329, Ser-339, Ser-347, Ser-352, and Ser-367. Positions 319–329 are enriched in basic and acidic residues; the sequence is AGRKPWERSNS. A required for interaction with ZDHHC17 region spans residues 340–360; it reads RTPSVAKSPEAKSPLQSQPHS. Residues 377-411 form an EVH2 block C region; it reads DLDRMKQEILEEVVRELHKVKEEIIDAIRQELSGI.

Belongs to the Ena/VASP family. As to quaternary structure, homotetramer. Binds to the SH3 domains of ABL1, LYN and SRC. Also binds to profilin, with preference for isoform IIa of PFN2, and the WW domain of APBB1/FE65. Binds to SEMA6A. Interacts, via the Pro-rich region, with the C-terminal SH3 domain of DNMBP. Interacts with RAPH1. Binds, via the EVH1 domain, the Pro-rich domain of Listeria monocytogenes actA. Binds, via the EVH1 domain, the Pro-rich domain of ZYX. Interacts with FYB1. Interacts with ZDHHC17. Post-translationally, phosphorylated by PKA; phosphorylation abolishes binding to SH3 domains of ABL and SRC. As to expression, highest expression in thymus and spleen (at protein level). Low levels in placenta, ovary, testis, fat and lung (at protein level). Isoform 1 and isoform 2 are expressed in cortical neurons and glial cells.

It is found in the cytoplasm. Its subcellular location is the cytoskeleton. It localises to the stress fiber. The protein localises to the cell projection. The protein resides in the lamellipodium. Ena/VASP proteins are actin-associated proteins involved in a range of processes dependent on cytoskeleton remodeling and cell polarity such as axon guidance and lamellipodial and filopodial dynamics in migrating cells. EVL enhances actin nucleation and polymerization. This is Ena/VASP-like protein (Evl) from Mus musculus (Mouse).